The following is a 354-amino-acid chain: Protein FAM181A (354 aa).

Composition is skewed to basic and acidic residues over residues 1–14 (MPLE…ERND) and 129–142 (YLKR…RRLL). 3 disordered regions span residues 1–35 (MPLE…KQVS), 117–160 (LPRG…CKEK), and 172–193 (AKEQ…VPMR).

This sequence belongs to the FAM181 family.

This chain is Protein FAM181A (FAM181A), found in Homo sapiens (Human).